The sequence spans 236 residues: Protein YIPF6 (236 aa).

Alanine 2 is subject to N-acetylalanine. Residues 2-84 (AEAEDSPGEQ…HVLYPRKSNT (83 aa)) lie on the Cytoplasmic side of the membrane. Position 7 is a phosphoserine (serine 7). A helical membrane pass occupies residues 85–105 (LLRDWDLWGPLILCVSLALML). The Lumenal segment spans residues 106–116 (QKSSVEGKRDG). The helical transmembrane segment at 117–137 (GSPEFAEVFVIIWFGAVTITL) threads the bilayer. Residues 138 to 147 (NSKLLGGNIS) lie on the Cytoplasmic side of the membrane. Residues 148–168 (FFQSLCVLGYCVLPLNIAMLI) traverse the membrane as a helical segment. The Lumenal segment spans residues 169 to 185 (CRLLLLAGQGPINFMIR). Residues 186–206 (LFVVLVMFAWSVIASTAFLAD) form a helical membrane-spanning segment. Topologically, residues 207–213 (CQPPNRK) are cytoplasmic. The chain crosses the membrane as a helical span at residues 214–234 (ALAVYPVFLFYFVVSWMILTF). Residues 235–236 (TP) lie on the Lumenal side of the membrane.

It belongs to the YIP1 family. Predominantly interacts with YIPF1 or YIPF2, but may also form a ternary complex with YIPF1 and YIPF2. This interaction may stabilize YIPF1 and YIPF2.

It localises to the golgi apparatus membrane. Functionally, may be required for stable YIPF1 and YIPF2 protein expression. The polypeptide is Protein YIPF6 (Yipf6) (Rattus norvegicus (Rat)).